A 406-amino-acid chain; its full sequence is Glutamyl-tRNA reductase (406 aa).

Substrate-binding positions include 49 to 52 (TCHR), Ser-107, 112 to 114 (EPQ), and Gln-118. The active-site Nucleophile is Cys-50. 187–192 (GAGETG) contacts NADP(+).

This sequence belongs to the glutamyl-tRNA reductase family. As to quaternary structure, homodimer.

It carries out the reaction (S)-4-amino-5-oxopentanoate + tRNA(Glu) + NADP(+) = L-glutamyl-tRNA(Glu) + NADPH + H(+). It participates in porphyrin-containing compound metabolism; protoporphyrin-IX biosynthesis; 5-aminolevulinate from L-glutamyl-tRNA(Glu): step 1/2. Its function is as follows. Catalyzes the NADPH-dependent reduction of glutamyl-tRNA(Glu) to glutamate 1-semialdehyde (GSA). The protein is Glutamyl-tRNA reductase of Thermomicrobium roseum (strain ATCC 27502 / DSM 5159 / P-2).